The sequence spans 682 residues: DNA-directed RNA polymerase subunit beta' (682 aa).

Positions 69, 71, 87, and 90 each coordinate Zn(2+). The Mg(2+) site is built by Asp-491, Asp-493, and Asp-495.

This sequence belongs to the RNA polymerase beta' chain family. RpoC1 subfamily. In plastids the minimal PEP RNA polymerase catalytic core is composed of four subunits: alpha, beta, beta', and beta''. When a (nuclear-encoded) sigma factor is associated with the core the holoenzyme is formed, which can initiate transcription. Mg(2+) serves as cofactor. Requires Zn(2+) as cofactor.

The protein resides in the plastid. It is found in the chloroplast. It carries out the reaction RNA(n) + a ribonucleoside 5'-triphosphate = RNA(n+1) + diphosphate. Functionally, DNA-dependent RNA polymerase catalyzes the transcription of DNA into RNA using the four ribonucleoside triphosphates as substrates. In Lotus japonicus (Lotus corniculatus var. japonicus), this protein is DNA-directed RNA polymerase subunit beta'.